The following is a 196-amino-acid chain: Large ribosomal subunit protein bL25 (196 aa).

It belongs to the bacterial ribosomal protein bL25 family. CTC subfamily. As to quaternary structure, part of the 50S ribosomal subunit; part of the 5S rRNA/L5/L18/L25 subcomplex. Contacts the 5S rRNA. Binds to the 5S rRNA independently of L5 and L18.

Its function is as follows. This is one of the proteins that binds to the 5S RNA in the ribosome where it forms part of the central protuberance. In Bacteroides thetaiotaomicron (strain ATCC 29148 / DSM 2079 / JCM 5827 / CCUG 10774 / NCTC 10582 / VPI-5482 / E50), this protein is Large ribosomal subunit protein bL25.